The following is a 244-amino-acid chain: Type I iodothyronine deiodinase (244 aa).

The Extracellular portion of the chain corresponds to M1–R12. The chain crosses the membrane as a helical; Signal-anchor for type III membrane protein span at residues L13–F33. The Cytoplasmic portion of the chain corresponds to P34–S244. U121 is a catalytic residue. A non-standard amino acid (selenocysteine) is located at residue U121.

Belongs to the iodothyronine deiodinase family. As to quaternary structure, predominantly monomer. Can form homodimers but homodimerization is not essential for enzyme activity.

The protein localises to the cell membrane. It is found in the endoplasmic reticulum membrane. Its subcellular location is the basolateral cell membrane. It carries out the reaction 3,3',5-triiodo-L-thyronine + iodide + A + H(+) = L-thyroxine + AH2. It catalyses the reaction 3,3',5'-triiodo-L-thyronine + iodide + A + H(+) = L-thyroxine + AH2. The enzyme catalyses 3,3'-diiodo-L-thyronine + iodide + A + H(+) = 3,3',5'-triiodo-L-thyronine + AH2. The catalysed reaction is 3,3'-diiodo-L-thyronine + iodide + A + H(+) = 3,3',5-triiodo-L-thyronine + AH2. It carries out the reaction 3'-iodo-L-thyronine + iodide + A + H(+) = 3',5'-diiodo-L-thyronine + AH2. It catalyses the reaction 3-iodo-L-thyronine + iodide + A + H(+) = 3,5-diiodo-L-thyronine + AH2. The enzyme catalyses 3-iodo-L-thyronine + iodide + A + H(+) = 3,3'-diiodo-L-thyronine + AH2. The catalysed reaction is 3,3'-diiodothyronamine + iodide + A + H(+) = 3,3',5'-triiodothyronamine + AH2. It carries out the reaction 3'-iodothyronamine + iodide + A + H(+) = 3',5'-diiodothyronamine + AH2. It catalyses the reaction 3-iodothyronamine + iodide + A + H(+) = 3,3'-diiodothyronamine + AH2. The enzyme catalyses 3,3'-diiodothyronamine + iodide + A + H(+) = 3,3',5-triiodothyronamine + AH2. The catalysed reaction is 3-iodothyronamine + iodide + A + H(+) = 3,5-diiodothyronamine + AH2. It carries out the reaction 3,3'-diiodo-L-thyronine sulfate + iodide + A + H(+) = 3,3',5'-triiodo-L-thyronine sulfate + AH2. It catalyses the reaction 3,3',5'-triiodo-L-thyronine sulfate + iodide + A + H(+) = L-thyroxine sulfate + AH2. The enzyme catalyses 3,3'-diiodo-L-thyronine sulfate + iodide + A + H(+) = 3,3',5-triiodo-L-thyronine sulfate + AH2. Functionally, plays a crucial role in the metabolism of thyroid hormones (TH) and has specific roles in TH activation and inactivation by deiodination. Catalyzes the deiodination of L-thyroxine (T4) to 3,5,3'-triiodothyronine (T3) and 3',5'-diiodothyronine (3',5'-T2) to 3'-monoiodothyronine (3'-T1) via outer-ring deiodination (ORD). Catalyzes the deiodination of T4 to 3,3',5'-triiodothyronine (rT3), T3 to 3,3'-diiodothyronine (3,3'-T2), 3,5-diiodothyronine (3,5-T2) to 3-monoiodothyronine (3-T1) and 3,3'-T2 to 3-T1 via inner-ring deiodination (IRD). Catalyzes the deiodination of rT3 to 3,3'-T2 via ORD. Catalyzes the phenolic ring deiodinations of 3,3',5'-triiodothyronamine, 3',5'-diiodothyronamine and 3,3'-diiodothyronamine as well as tyrosyl ring deiodinations of 3,5,3'-triiodothyronamine and 3,5-diiodothyronamine. Catalyzes the deiodination of L-thyroxine sulfate and 3,3',5-triiodo-L-thyronine sulfate via IRD and of 3,3',5'-triiodo-L-thyronine sulfate via ORD. The sequence is that of Type I iodothyronine deiodinase (DIO1) from Felis catus (Cat).